A 687-amino-acid chain; its full sequence is Probable intron-encoded endonuclease aI3 (687 aa).

Positions 1 to 374 (MKQMSYVTRW…NASMDVAFHD (374 aa)) are COX1 exons 1 to 3 encoded. 10 helical membrane passes run 19-39 (IGMTYLGFGMLSAMMGTGMSV), 69-89 (LLMMFFFIMPVWMGAFGNFFL), 103-123 (LNNISFWCLPPALVCMVCSVL), 152-172 (AMFAMHLTSMSSLLGAMNFMV), 188-208 (PLFAWAMFLTAMLLLLSLPVL), 240-260 (LFWFFGHPEVYILMMPGFGVM), 273-293 (FGEMGMLYAMGSIGFLGFLVW), 315-335 (MVIAVPTGIKIFSWLATIYGG), 341-361 (VPMLFALGFLFLFTMGGLTGV), and 376-396 (IFIYYVSFFLYTLYNMYNNYT). Residues 375-687 (RIFIYYVSFF…KKESLMKFLK (313 aa)) form a COX1 intron 3 encoded region.

The protein in the C-terminal section; belongs to the LAGLIDADG endonuclease family. It in the N-terminal section; belongs to the heme-copper respiratory oxidase family. In terms of processing, the mature protein may arise from proteolytic cleavage of an in-frame translation of COX1 exons 1 to 3 plus intron 3, containing the aI3 open reading frame.

The protein resides in the mitochondrion. It localises to the membrane. In terms of biological role, mitochondrial DNA endonuclease involved in intron homing. This Debaryomyces hansenii (strain ATCC 36239 / CBS 767 / BCRC 21394 / JCM 1990 / NBRC 0083 / IGC 2968) (Yeast) protein is Probable intron-encoded endonuclease aI3 (aI3).